The sequence spans 302 residues: Aquaporin NIP3-1 (302 aa).

The segment at 1 to 31 (MEPGSTPPNGSAPATPGTPAPLFSSGGPRVD) is disordered. Low complexity predominate over residues 7–21 (PPNGSAPATPGTPAP). 2 helical membrane passes run 76–96 (LGAEFVGTFILIFFATAAPIV) and 102–122 (GAISPFGNAACAGLAVATVIL). The NPA 1 signature appears at 133-135 (NPS). The next 3 membrane-spanning stretches (helical) occupy residues 149-169 (LQVPAYVAVQALASVCAAFAL), 193-213 (AFFTEFIISFNLLFVVTAVAT), and 217-237 (AVGELAGIAVGAAVTLNILVA). Residues 246–248 (NPV) carry the NPA 2 motif. The chain crosses the membrane as a helical span at residues 264 to 284 (WIYLLAPTLGALAGASVYKAV).

The protein belongs to the MIP/aquaporin (TC 1.A.8) family. NIP (TC 1.A.8.12) subfamily.

The protein localises to the membrane. Functionally, aquaporins facilitate the transport of water and small neutral solutes across cell membranes. The polypeptide is Aquaporin NIP3-1 (NIP3-1) (Zea mays (Maize)).